We begin with the raw amino-acid sequence, 443 residues long: ATP-dependent protease ATPase subunit HslU (443 aa).

ATP-binding positions include isoleucine 20, 62–67 (GVGKTE), aspartate 255, glutamate 321, and arginine 393.

The protein belongs to the ClpX chaperone family. HslU subfamily. A double ring-shaped homohexamer of HslV is capped on each side by a ring-shaped HslU homohexamer. The assembly of the HslU/HslV complex is dependent on binding of ATP.

Its subcellular location is the cytoplasm. Its function is as follows. ATPase subunit of a proteasome-like degradation complex; this subunit has chaperone activity. The binding of ATP and its subsequent hydrolysis by HslU are essential for unfolding of protein substrates subsequently hydrolyzed by HslV. HslU recognizes the N-terminal part of its protein substrates and unfolds these before they are guided to HslV for hydrolysis. This is ATP-dependent protease ATPase subunit HslU from Helicobacter pylori (strain P12).